The following is a 279-amino-acid chain: ATP synthase gamma chain (279 aa).

This sequence belongs to the ATPase gamma chain family. As to quaternary structure, F-type ATPases have 2 components, CF(1) - the catalytic core - and CF(0) - the membrane proton channel. CF(1) has five subunits: alpha(3), beta(3), gamma(1), delta(1), epsilon(1). CF(0) has three main subunits: a, b and c.

The protein resides in the cell membrane. In terms of biological role, produces ATP from ADP in the presence of a proton gradient across the membrane. The gamma chain is believed to be important in regulating ATPase activity and the flow of protons through the CF(0) complex. This chain is ATP synthase gamma chain, found in Mycoplasmopsis pulmonis (strain UAB CTIP) (Mycoplasma pulmonis).